The chain runs to 90 residues: Beta-microseminoprotein (90 aa).

5 disulfides stabilise this stretch: cysteine 2/cysteine 16, cysteine 34/cysteine 70, cysteine 37/cysteine 46, cysteine 39/cysteine 47, and cysteine 61/cysteine 84. At valine 90 the chain carries Valine amide.

It belongs to the beta-microseminoprotein family.

It is found in the secreted. This chain is Beta-microseminoprotein (MSMB), found in Struthio camelus (Common ostrich).